We begin with the raw amino-acid sequence, 686 residues long: MSGRNNNKLPSNLPQLQNLIKRDPPAYVEEFLQQYNHYKSNMEIFKLQPNKPSKELAELVMFMAQIGHCYPEHLSEFPQELKDLLSYNHTVLDPDLRMTFCKALILLRNKNLINPSDLLELFFELLRCRDKLLRKTLYTHIVTDIKNINAKHKNNKVNVVLQNFMYTMLRDSNATAAKMSLDVMIELYRRNIWNDAKTVNVITTACFSKITKILVAALTFFLGKDEEEKQDSDSESEDDGPTARDLLVQYATGKKGSKNKKKLEKAMKVLKKQKKKKKPEVFNFSAIHLIHDPQDFAEKLLKQLESCKERFEVKMMLMNLISRLVGIHELFLFNFYPFVQRFLQPHQREVTKILLFAAQASHHLVPPEIIQSLLLTVANNFVTDKNSGEVMTVGINAIKEITARCPLAMTEELLQDLAQYKTHKDKNVMMSARTLIHLFRTLNPQMLQKKFRGKPTEASIEARIQEYGELDAKDYIPGAEVLELEKEENTENDEDGWESASLSEEEEDGEWVDVHHSSDEEQQAVAKKLDSMPMEERKAKAAAVSTSRVLTQDDFQKIRMAQMKKEMDAAPGKAQKRKYLDMDSDEESRGELLSLRDIERLHKKPKSDKETRLATAMAGRTDRKEFVRKKTKINPFSSSTNKEKKKQKNFMMMRYSQNVRSKTSRSFREKQLALRDALLKKRKRMK.

Residues Ser232, Ser234, and Ser236 each carry the phosphoserine modification. Positions 254–315 (KKGSKNKKKL…SCKERFEVKM (62 aa)) form a coiled coil. A disordered region spans residues 484 to 508 (LEKEENTENDEDGWESASLSEEEED). The segment covering 490-508 (TENDEDGWESASLSEEEED) has biased composition (acidic residues). Thr551 is modified (phosphothreonine). Positions 563-586 (MKKEMDAAPGKAQKRKYLDMDSDE) are disordered. A phosphoserine mark is found at Ser584, Ser588, and Ser594. Residues 604-649 (KPKSDKETRLATAMAGRTDRKEFVRKKTKINPFSSSTNKEKKKQKN) form a disordered region.

It belongs to the SDA1 family.

It localises to the nucleus. The protein resides in the nucleolus. Its function is as follows. Required for 60S pre-ribosomal subunits export to the cytoplasm. The chain is Protein SDA1 homolog (Sdad1) from Rattus norvegicus (Rat).